The chain runs to 204 residues: MIGRLRGIILEKQPPVVLIEASGVGYEVQMPMTCFYELPDIQHEAIIFTHFVVREDAQLLFGFNSKPERALFRELIKVNGVGPKLALAILSGMSAQQFVTAVEREEIAALVKLPGVGKKTAERLVVEMKDRFKGMHGDLFASDAPFALTSEMPKETANDAEGEAVAALTALGYKPQEASRMIVKVGKPDADCETLIREALRAAI.

The domain I stretch occupies residues 1-64; it reads MIGRLRGIIL…EDAQLLFGFN (64 aa). The interval 65-143 is domain II; the sequence is SKPERALFRE…GMHGDLFASD (79 aa). The interval 144–155 is flexible linker; the sequence is APFALTSEMPKE. The tract at residues 156 to 204 is domain III; the sequence is TANDAEGEAVAALTALGYKPQEASRMIVKVGKPDADCETLIREALRAAI.

It belongs to the RuvA family. In terms of assembly, homotetramer. Forms an RuvA(8)-RuvB(12)-Holliday junction (HJ) complex. HJ DNA is sandwiched between 2 RuvA tetramers; dsDNA enters through RuvA and exits via RuvB. An RuvB hexamer assembles on each DNA strand where it exits the tetramer. Each RuvB hexamer is contacted by two RuvA subunits (via domain III) on 2 adjacent RuvB subunits; this complex drives branch migration. In the full resolvosome a probable DNA-RuvA(4)-RuvB(12)-RuvC(2) complex forms which resolves the HJ.

It localises to the cytoplasm. Its function is as follows. The RuvA-RuvB-RuvC complex processes Holliday junction (HJ) DNA during genetic recombination and DNA repair, while the RuvA-RuvB complex plays an important role in the rescue of blocked DNA replication forks via replication fork reversal (RFR). RuvA specifically binds to HJ cruciform DNA, conferring on it an open structure. The RuvB hexamer acts as an ATP-dependent pump, pulling dsDNA into and through the RuvAB complex. HJ branch migration allows RuvC to scan DNA until it finds its consensus sequence, where it cleaves and resolves the cruciform DNA. The polypeptide is Holliday junction branch migration complex subunit RuvA (Erwinia tasmaniensis (strain DSM 17950 / CFBP 7177 / CIP 109463 / NCPPB 4357 / Et1/99)).